Reading from the N-terminus, the 594-residue chain is E3 ubiquitin-protein ligase TRAF7 (594 aa).

The disordered stretch occupies residues 1-33 (MPPINTPRRSDSAISVRSLHSESSMSLRSTFSL). Ser-12 and Ser-15 each carry phosphoserine. Over residues 15-29 (SVRSLHSESSMSLRS) the composition is skewed to low complexity. The RING-type zinc-finger motif lies at 55-89 (CQLCCSVFKDPVITTCGHTFCRRCALKSEKCPVDN). A TRAF-type zinc finger spans residues 146–216 (HESSCDYRPV…RFEGLKEFLQ (71 aa)). 7 WD repeats span residues 318–357 (GHQGPVWCLCVYSMGDLLFSGSSDKTIKVWDTCTTYKCQK), 361–398 (GHDGIVLALCIQGCKLYSGSADCTIIVWDIQNLQKVNT), 401–437 (AHDNPVCTLVSSHNMLFSGSLKAIKVWDIVGTELKLK), 439–478 (ELTGLNHWVRALVAAQSYLYSGSYQTIKIWDIRTLDCIHV), 481–518 (TSGGSVYSIAVTNHHIVCGTYENLIHVWDIESKEQVRT), 521–562 (GHVG…CTQT), and 565–593 (RHQGSVTALAVSRGRLFSGAVDSTVKVWT).

Belongs to the WD repeat TRAF7 family. In terms of assembly, homodimer. Interacts with MAP3K3 and promotes the kinase activity of this enzyme. In terms of processing, phosphorylated by MAP3K3. Ubiquitinates itself upon phosphorylation. In terms of tissue distribution, ubiquitously expressed. Expression is relatively high in heart, liver, kidney, testis, prostate, thyroid, and salivary gland.

The protein resides in the cytoplasmic vesicle. It is found in the cytoplasm. Its subcellular location is the nucleus. It catalyses the reaction S-ubiquitinyl-[E2 ubiquitin-conjugating enzyme]-L-cysteine + [acceptor protein]-L-lysine = [E2 ubiquitin-conjugating enzyme]-L-cysteine + N(6)-ubiquitinyl-[acceptor protein]-L-lysine.. It participates in protein modification; protein ubiquitination. Functionally, E3 ubiquitin and SUMO-protein ligase that plays a role in different biological processes such as innate immunity, inflammation or apoptosis. Potentiates MAP3K3-mediated activation of the NF-kappa-B, JUN/AP1 and DDIT3 transcriptional regulators. Negatively regulates MYB transcriptional activity by sequestering it to the cytosol via SUMOylation. Plays a role in the phosphorylation of MAPK1 and/or MAPK3, probably via its interaction with MAP3K3. Negatively regulates RLR-mediated innate immunity by promoting 'Lys-48'-linked ubiquitination of TBK1 through its RING domain to inhibit the cellular antiviral response. Promotes 'Lys-29'-linked polyubiquitination of NEMO/IKBKG and RELA leading to targeting these two proteins to lysosomal degradative pathways, reducing the transcriptional activity of NF-kappa-B. This Mus musculus (Mouse) protein is E3 ubiquitin-protein ligase TRAF7.